We begin with the raw amino-acid sequence, 619 residues long: tRNA (guanine(37)-N(1))-methyltransferase 2 (619 aa).

Residues 1–10 constitute a mitochondrion transit peptide; sequence MVSKLSLFRA. Residues arginine 434, 472-473, 500-501, and asparagine 523 each bind S-adenosyl-L-methionine; these read DL and DG.

It belongs to the class I-like SAM-binding methyltransferase superfamily. TRM5/TYW2 family. Monomer.

The protein resides in the mitochondrion matrix. The protein localises to the nucleus. It is found in the cytoplasm. It carries out the reaction guanosine(37) in tRNA + S-adenosyl-L-methionine = N(1)-methylguanosine(37) in tRNA + S-adenosyl-L-homocysteine + H(+). In terms of biological role, specifically methylates the N1 position of guanosine-37 in various cytoplasmic and mitochondrial tRNAs. Methylation is not dependent on the nature of the nucleoside 5' of the target nucleoside. This is the first step in the biosynthesis of wybutosine (yW), a modified base adjacent to the anticodon of tRNAs and required for accurate decoding. In Arabidopsis thaliana (Mouse-ear cress), this protein is tRNA (guanine(37)-N(1))-methyltransferase 2.